An 82-amino-acid chain; its full sequence is Small ribosomal subunit protein bS16 (82 aa).

This sequence belongs to the bacterial ribosomal protein bS16 family.

In Klebsiella pneumoniae (strain 342), this protein is Small ribosomal subunit protein bS16.